The sequence spans 275 residues: Formamidopyrimidine-DNA glycosylase (275 aa).

Residue Pro2 is the Schiff-base intermediate with DNA of the active site. The active-site Proton donor is the Glu3. The active-site Proton donor; for beta-elimination activity is Lys58. DNA-binding residues include His91, Arg109, and Lys154. An FPG-type zinc finger spans residues 240-274; that stretch reads AVYERAGLACRVCGTPIRRLVQGQRATYFCPHCQK. Arg264 serves as the catalytic Proton donor; for delta-elimination activity.

This sequence belongs to the FPG family. In terms of assembly, monomer. The cofactor is Zn(2+).

It carries out the reaction Hydrolysis of DNA containing ring-opened 7-methylguanine residues, releasing 2,6-diamino-4-hydroxy-5-(N-methyl)formamidopyrimidine.. The catalysed reaction is 2'-deoxyribonucleotide-(2'-deoxyribose 5'-phosphate)-2'-deoxyribonucleotide-DNA = a 3'-end 2'-deoxyribonucleotide-(2,3-dehydro-2,3-deoxyribose 5'-phosphate)-DNA + a 5'-end 5'-phospho-2'-deoxyribonucleoside-DNA + H(+). Involved in base excision repair of DNA damaged by oxidation or by mutagenic agents. Acts as a DNA glycosylase that recognizes and removes damaged bases. Has a preference for oxidized purines, such as 7,8-dihydro-8-oxoguanine (8-oxoG). Has AP (apurinic/apyrimidinic) lyase activity and introduces nicks in the DNA strand. Cleaves the DNA backbone by beta-delta elimination to generate a single-strand break at the site of the removed base with both 3'- and 5'-phosphates. The protein is Formamidopyrimidine-DNA glycosylase of Bordetella avium (strain 197N).